We begin with the raw amino-acid sequence, 248 residues long: UPF0246 protein RAF_ORF0648 (248 aa).

It belongs to the UPF0246 family.

The sequence is that of UPF0246 protein RAF_ORF0648 from Rickettsia africae (strain ESF-5).